The following is a 320-amino-acid chain: Aspartate carbamoyltransferase catalytic subunit (320 aa).

Residues Arg68 and Thr69 each coordinate carbamoyl phosphate. Lys96 is an L-aspartate binding site. Carbamoyl phosphate-binding residues include Arg118, His148, and Gln151. The L-aspartate site is built by Arg181 and Arg236. Positions 277 and 278 each coordinate carbamoyl phosphate.

This sequence belongs to the aspartate/ornithine carbamoyltransferase superfamily. ATCase family. As to quaternary structure, heterododecamer (2C3:3R2) of six catalytic PyrB chains organized as two trimers (C3), and six regulatory PyrI chains organized as three dimers (R2).

The catalysed reaction is carbamoyl phosphate + L-aspartate = N-carbamoyl-L-aspartate + phosphate + H(+). It participates in pyrimidine metabolism; UMP biosynthesis via de novo pathway; (S)-dihydroorotate from bicarbonate: step 2/3. Its function is as follows. Catalyzes the condensation of carbamoyl phosphate and aspartate to form carbamoyl aspartate and inorganic phosphate, the committed step in the de novo pyrimidine nucleotide biosynthesis pathway. This is Aspartate carbamoyltransferase catalytic subunit from Polaromonas naphthalenivorans (strain CJ2).